Here is a 258-residue protein sequence, read N- to C-terminus: Type III pantothenate kinase (258 aa).

6–13 is a binding site for ATP; sequence DVGNTNTV. Residues tyrosine 100 and 107–110 contribute to the substrate site; that span reads GADR. Aspartate 109 serves as the catalytic Proton acceptor. Aspartate 129 provides a ligand contact to K(+). Threonine 132 is a binding site for ATP. Substrate is bound at residue threonine 184.

This sequence belongs to the type III pantothenate kinase family. In terms of assembly, homodimer. NH4(+) is required as a cofactor. Requires K(+) as cofactor.

The protein resides in the cytoplasm. The catalysed reaction is (R)-pantothenate + ATP = (R)-4'-phosphopantothenate + ADP + H(+). It participates in cofactor biosynthesis; coenzyme A biosynthesis; CoA from (R)-pantothenate: step 1/5. Its function is as follows. Catalyzes the phosphorylation of pantothenate (Pan), the first step in CoA biosynthesis. The polypeptide is Type III pantothenate kinase (Geobacillus thermodenitrificans (strain NG80-2)).